The sequence spans 380 residues: F-box/kelch-repeat protein At3g18720 (380 aa).

An F-box domain is found at 47–94; that stretch reads LWDKQIPTDLLQEILSRLGLKANIHASLVCKTWLKEAVSVRKFQSRPW. Kelch repeat units follow at residues 190-233 and 234-279; these read CVIS…INRC and IFSN…LVRQ.

This chain is F-box/kelch-repeat protein At3g18720, found in Arabidopsis thaliana (Mouse-ear cress).